The sequence spans 339 residues: Caspase drICE (339 aa).

The propeptide occupies 1–28 (MDATNNGESADQVGIRVGNPEQPNDHTD). A disordered region spans residues 1 to 45 (MDATNNGESADQVGIRVGNPEQPNDHTDALGSVGSGGAGSSGLVA). Active-site residues include histidine 169 and cysteine 211. The propeptide occupies 218-230 (GGVTMQRSQTETD).

This sequence belongs to the peptidase C14A family. Heterotetramer that consists of two anti-parallel arranged heterodimers, each one formed by a 21 kDa (p21) and a 12 kDa (p12) subunit. Inactive pro-form can homodimerize. Dronc and Drice can form a stable complex. Interacts with Diap2 (via BIR3 domain) to form a stable complex. May interact with some isoforms of Dark.

With respect to regulation, zymogen activated by proteolytic cleavage; cleaved by the initiator caspase Dronc upon apoptosis induction. Its function is as follows. Involved in the activation cascade of caspases responsible for apoptosis execution. Acts downstream of rpr. Cleaves baculovirus p35 and lamin DmO in vitro. This Drosophila melanogaster (Fruit fly) protein is Caspase drICE (Drice).